The chain runs to 380 residues: GATOR1 complex protein NPRL2 (380 aa).

Residues 1–133 (MGSSCRIECI…SKQKLVPIMT (133 aa)) form an interaction with PDPK1 region. Arginine 78 lines the GDP pocket. Arginine 78 is modified (asymmetric dimethylarginine). Glycyl lysine isopeptide (Lys-Gly) (interchain with G-Cter in ubiquitin) cross-links involve residues lysine 158 and lysine 357.

It belongs to the NPR2 family. Within the GATOR complex, component of the GATOR1 subcomplex, made of DEPDC5, NPRL2 and NPRL3. GATOR1 mediates the strong interaction of the GATOR complex with small GTPases Rag (RagA/RRAGA, RagB/RRAGB, RagC/RRAGC and/or RagD/RRAGD) heterodimers. GATOR1 interacts with GPR155/LYCHOS; interaction takes place in presence of cholesterol and prevents interaction between GATOR1 and KICSTOR. Interacts with PDPK1. In terms of processing, in the presence of abundant amino acids, ubiquitinated at Lys-158 and Lys-357 via 'Lys-6'-linked ubiquitination by the WDR24 component of the GATOR2 complex, thereby inhibiting the GATOR1 complex and promoting mTORC1 activation. Asymmetric dimethylation at Arg-78 by PRMT1 inhibits the GTPase activator activity of the GATOR1 complex and consequently inducing timely mTORC1 activation under methionine-sufficient conditions.

Its subcellular location is the lysosome membrane. Its function is as follows. Catalytic component of the GATOR1 complex, a multiprotein complex that functions as an inhibitor of the amino acid-sensing branch of the mTORC1 pathway. In response to amino acid depletion, the GATOR1 complex has GTPase activating protein (GAP) activity and strongly increases GTP hydrolysis by RagA/RRAGA (or RagB/RRAGB) within heterodimeric Rag complexes, thereby turning them into their inactive GDP-bound form, releasing mTORC1 from lysosomal surface and inhibiting mTORC1 signaling. In the presence of abundant amino acids, the GATOR1 complex is ubiquitinated and inhibited by GATOR2. Within the GATOR1 complex, NPRL2 constitutes the catalytic subunit that mediates the GTPase activator activity and under methionine-sufficient conditions, the GTPase activator activity is inhibited by PRMT1 through methylation and consequently inducing timely mTORC1 activation. Suppresses Src-dependent tyrosine phosphorylation and activation of PDPK1 and its downstream signaling. Down-regulates PDPK1 kinase activity by interfering with tyrosine phosphorylation at 'Tyr-9', 'Tyr-373' and 'Tyr-376' residues. May act as a tumor suppressor. Suppresses cell growth and enhances sensitivity to various anticancer drugs. The polypeptide is GATOR1 complex protein NPRL2 (Bos taurus (Bovine)).